Here is a 382-residue protein sequence, read N- to C-terminus: Serine protease 23 (382 aa).

An N-terminal signal peptide occupies residues 1–22 (MAGIPGLFILLVLLCVFMQVSP). An N-linked (GlcNAc...) asparagine glycan is attached at Asn-92. Cys-159 and Cys-175 form a disulfide bridge. His-174 acts as the Charge relay system in catalysis. N-linked (GlcNAc...) asparagine glycosylation is present at Asn-206. Active-site charge relay system residues include Asp-239 and Ser-315.

Belongs to the peptidase S1 family.

It localises to the secreted. The chain is Serine protease 23 (Prss23) from Mus musculus (Mouse).